A 309-amino-acid polypeptide reads, in one-letter code: MRKIIVGSRKSKLALTQTNWFIDQLKALGLPYEFEVKEIVTKGDVILDVTLSKVGGKGLFVKEIEHALLTKEIDMAVHSMKDMPAVLPEGLMIGCTPKRVDPRDAFISKNGASFKELAEGAILGTSSLRRSAQLLAARPDLQVKWIRGNIDTRLRKLKEEDYDAIILATAGLQRMGWDNEVITEHLDETLCVPAVGQGALAIECREDDKDLLQLLAHMNDGVTEKTVAAERVFLHKLEGGCQVPIAGYATLTENDAIELTALVGSMDGSVLLKETVVGTDPEKVGLEAADRLIKQGAKELILAANKGQQ.

Residue Cys241 is modified to S-(dipyrrolylmethanemethyl)cysteine.

The protein belongs to the HMBS family. In terms of assembly, monomer. Requires dipyrromethane as cofactor.

The catalysed reaction is 4 porphobilinogen + H2O = hydroxymethylbilane + 4 NH4(+). It participates in porphyrin-containing compound metabolism; protoporphyrin-IX biosynthesis; coproporphyrinogen-III from 5-aminolevulinate: step 2/4. In terms of biological role, tetrapolymerization of the monopyrrole PBG into the hydroxymethylbilane pre-uroporphyrinogen in several discrete steps. This is Porphobilinogen deaminase from Bacillus cereus (strain ATCC 10987 / NRS 248).